Consider the following 308-residue polypeptide: MPELPEVEVVRRGVARWVVGRTVSSARFLHPRVTRRHVAGPDDAGARTRGLVVADAVRRGKYLWLPLATPDGRAEEAMVVHLGMSGQLLVEAADAPEEKHLRAVWTFDDGGEDLRFVDQRTFGGIAVVPLVATPDGGPGGLGETPDGSWSGSMPAPVAHIARDPLDPAFDDAVFARRLRERTTGLKRALLDQTLVSGVGNIYADEALWRAKLHYARPTRSVTPAQAAALLAGLREVMTAALDAGGTSFDSLYVNVNGASGYFDRSLAVYGQEGRPCPRCGALVRRDAFMNRSSFSCPVCQPVPRSPHW.

Proline 2 functions as the Schiff-base intermediate with DNA in the catalytic mechanism. Catalysis depends on glutamate 3, which acts as the Proton donor. Lysine 61 (proton donor; for beta-elimination activity) is an active-site residue. The DNA site is built by histidine 100, arginine 120, and arginine 181. The FPG-type zinc finger occupies 267-301; sequence AVYGQEGRPCPRCGALVRRDAFMNRSSFSCPVCQP. Residue arginine 291 is the Proton donor; for delta-elimination activity of the active site.

It belongs to the FPG family. As to quaternary structure, monomer. Requires Zn(2+) as cofactor.

The enzyme catalyses Hydrolysis of DNA containing ring-opened 7-methylguanine residues, releasing 2,6-diamino-4-hydroxy-5-(N-methyl)formamidopyrimidine.. The catalysed reaction is 2'-deoxyribonucleotide-(2'-deoxyribose 5'-phosphate)-2'-deoxyribonucleotide-DNA = a 3'-end 2'-deoxyribonucleotide-(2,3-dehydro-2,3-deoxyribose 5'-phosphate)-DNA + a 5'-end 5'-phospho-2'-deoxyribonucleoside-DNA + H(+). Its function is as follows. Involved in base excision repair of DNA damaged by oxidation or by mutagenic agents. Acts as a DNA glycosylase that recognizes and removes damaged bases. Has a preference for oxidized purines, such as 7,8-dihydro-8-oxoguanine (8-oxoG). Has AP (apurinic/apyrimidinic) lyase activity and introduces nicks in the DNA strand. Cleaves the DNA backbone by beta-delta elimination to generate a single-strand break at the site of the removed base with both 3'- and 5'-phosphates. This chain is Formamidopyrimidine-DNA glycosylase, found in Kineococcus radiotolerans (strain ATCC BAA-149 / DSM 14245 / SRS30216).